The chain runs to 664 residues: Macoilin-1 (664 aa).

4 helical membrane-spanning segments follow: residues 28–48 (TFLY…DFVL), 75–95 (AFSV…LLFI), 120–140 (VCLP…AIRF), and 154–174 (FAAH…KSYV). The segment at 206–225 (QMLQRQERETEEATSKGMSE) is disordered. Positions 210 to 219 (RQERETEEAT) are enriched in basic and acidic residues. Residues Asn234, Asn336, Asn339, Asn348, and Asn655 are each glycosylated (N-linked (GlcNAc...) asparagine). Disordered regions lie at residues 315–364 (VGAG…LAPH) and 644–664 (FMDT…PLKK). Residues 334 to 348 (SHNSTNGSVPSSSSN) show a composition bias toward low complexity. Residues 644–658 (FMDTSPSSLDPNASV) are compositionally biased toward polar residues.

This sequence belongs to the macoilin family.

The protein resides in the nucleus membrane. It localises to the rough endoplasmic reticulum membrane. May play a role in the regulation of neuronal activity. This is Macoilin-1 from Danio rerio (Zebrafish).